The sequence spans 87 residues: Small ribosomal subunit protein uS17 (87 aa).

This sequence belongs to the universal ribosomal protein uS17 family. As to quaternary structure, part of the 30S ribosomal subunit.

One of the primary rRNA binding proteins, it binds specifically to the 5'-end of 16S ribosomal RNA. The sequence is that of Small ribosomal subunit protein uS17 from Geobacillus sp. (strain WCH70).